Reading from the N-terminus, the 496-residue chain is Angiopoietin-2 (496 aa).

Positions 1-18 (MWQIVFLTFGCDLVLASA) are cleaved as a signal peptide. Residues Asn-89, Asn-119, Asn-133, Asn-151, Asn-240, and Asn-304 are each glycosylated (N-linked (GlcNAc...) asparagine). Residues 159 to 256 (QLLQHSISTN…QQHDLMETVN (98 aa)) adopt a coiled-coil conformation. The region spanning 280–496 (TFRDCAEIFK…TTMMIRPADF (217 aa)) is the Fibrinogen C-terminal domain. Cys-284 and Cys-313 are disulfide-bonded. Positions 429, 431, 433, and 435 each coordinate Ca(2+). Intrachain disulfides connect Cys-433/Cys-435 and Cys-437/Cys-450.

In terms of assembly, interacts with TEK/TIE2, competing for the same binding site as ANGPT1. Interacts with ITGA5. Interacts with SVEP1/polydom. Interacts with THBD; this interaction significantly inhibits the generation of activated PC and TAFIa/CPB2 by the thrombin/thrombomodulin complex.

Its subcellular location is the secreted. Its function is as follows. Binds to TEK/TIE2, competing for the ANGPT1 binding site, and modulating ANGPT1 signaling. Can induce tyrosine phosphorylation of TEK/TIE2 in the absence of ANGPT1. In the absence of angiogenic inducers, such as VEGF, ANGPT2-mediated loosening of cell-matrix contacts may induce endothelial cell apoptosis with consequent vascular regression. In concert with VEGF, it may facilitate endothelial cell migration and proliferation, thus serving as a permissive angiogenic signal. Involved in the regulation of lymphangiogenesis. The chain is Angiopoietin-2 (Angpt2) from Rattus norvegicus (Rat).